A 427-amino-acid polypeptide reads, in one-letter code: 3-phosphoshikimate 1-carboxyvinyltransferase (427 aa).

Positions 20, 21, and 25 each coordinate 3-phosphoshikimate. Lys-20 contacts phosphoenolpyruvate. Residues Gly-92 and Arg-120 each contribute to the phosphoenolpyruvate site. 3-phosphoshikimate is bound by residues Ser-166, Gln-168, Asp-312, and Lys-339. Phosphoenolpyruvate is bound at residue Gln-168. The active-site Proton acceptor is the Asp-312. 2 residues coordinate phosphoenolpyruvate: Arg-343 and Arg-385.

It belongs to the EPSP synthase family. As to quaternary structure, monomer.

The protein localises to the cytoplasm. It catalyses the reaction 3-phosphoshikimate + phosphoenolpyruvate = 5-O-(1-carboxyvinyl)-3-phosphoshikimate + phosphate. The protein operates within metabolic intermediate biosynthesis; chorismate biosynthesis; chorismate from D-erythrose 4-phosphate and phosphoenolpyruvate: step 6/7. Its function is as follows. Catalyzes the transfer of the enolpyruvyl moiety of phosphoenolpyruvate (PEP) to the 5-hydroxyl of shikimate-3-phosphate (S3P) to produce enolpyruvyl shikimate-3-phosphate and inorganic phosphate. This chain is 3-phosphoshikimate 1-carboxyvinyltransferase, found in Streptococcus equi subsp. zooepidemicus (strain MGCS10565).